The sequence spans 228 residues: Putative lipoprotein LprH (228 aa).

A signal peptide spans 1–27 (MACLGRPGCRGWAGASLVLVVVLALAA). Residue Cys28 is the site of N-palmitoyl cysteine attachment. Cys28 carries the S-diacylglycerol cysteine lipid modification. A helical membrane pass occupies residues 191–211 (GLAVVPHAVLVLSACGFKPGF).

It localises to the cell membrane. This chain is Putative lipoprotein LprH (lprH), found in Mycobacterium bovis (strain ATCC BAA-935 / AF2122/97).